The primary structure comprises 857 residues: Linoleate 9S-lipoxygenase 6 (857 aa).

Residues 26-156 (NALDFTDLAG…RYKSDRIFFA (131 aa)) enclose the PLAT domain. Residues 159–857 (PYLPSETPEL…GKGIPNSVSI (699 aa)) form the Lipoxygenase domain. The interval 205–243 (NPDQGEQNVRTTLGGSADYPYPRRGRTGRPPTRTDPKSE) is disordered. Positions 208–218 (QGEQNVRTTLG) are enriched in polar residues. Residues H518, H523, H709, N713, and I857 each contribute to the Fe cation site.

This sequence belongs to the lipoxygenase family. Monomer. The cofactor is Fe cation. In terms of tissue distribution, expressed in tubers and roots. Detected in leaves, petioles and stems.

The protein localises to the cytoplasm. The catalysed reaction is (9Z,12Z)-octadecadienoate + O2 = (9S)-hydroperoxy-(10E,12Z)-octadecadienoate. It participates in lipid metabolism; oxylipin biosynthesis. Plant lipoxygenases may be involved in a number of diverse aspects of plant physiology including growth and development, pest resistance, and senescence or responses to wounding. Catalyzes the hydroperoxidation of lipids containing a cis,cis-1,4-pentadiene structure. Linoleic and linolenic acids are the preferred substrates, but is also active with arachidonic acid. The products are almost exclusively the S enantiomers. This chain is Linoleate 9S-lipoxygenase 6 (LOX1.6), found in Solanum tuberosum (Potato).